Reading from the N-terminus, the 148-residue chain is Protein NrdI (148 aa).

Belongs to the NrdI family.

Functionally, probably involved in ribonucleotide reductase function. The protein is Protein NrdI of Corynebacterium glutamicum (strain R).